The primary structure comprises 282 residues: Bifunctional protein FolD (282 aa).

NADP(+) is bound by residues 164–166 (GRS) and Ser-189.

This sequence belongs to the tetrahydrofolate dehydrogenase/cyclohydrolase family. As to quaternary structure, homodimer.

It carries out the reaction (6R)-5,10-methylene-5,6,7,8-tetrahydrofolate + NADP(+) = (6R)-5,10-methenyltetrahydrofolate + NADPH. It catalyses the reaction (6R)-5,10-methenyltetrahydrofolate + H2O = (6R)-10-formyltetrahydrofolate + H(+). Its pathway is one-carbon metabolism; tetrahydrofolate interconversion. In terms of biological role, catalyzes the oxidation of 5,10-methylenetetrahydrofolate to 5,10-methenyltetrahydrofolate and then the hydrolysis of 5,10-methenyltetrahydrofolate to 10-formyltetrahydrofolate. This is Bifunctional protein FolD from Streptococcus suis (strain 98HAH33).